We begin with the raw amino-acid sequence, 506 residues long: Serine/threonine-protein kinase RIO1 (506 aa).

The tract at residues 22–52 is disordered; that stretch reads TASSSSDDEPEQAVVKQEKLEAGEQIEEQYD. The Protein kinase domain occupies 142–506; the sequence is LNIDGCISTG…KKRAHRQHMK (365 aa). Residues 148–156, Lys-169, and Leu-241 each bind ATP; that span reads ISTGKEANV. Asp-285 acts as the Proton acceptor in catalysis. Asn-290 contributes to the ATP binding site. Residues Asn-290 and Asp-302 each contribute to the Mg(2+) site. Residue Asp-302 is the 4-aspartylphosphate intermediate of the active site. The segment at 418 to 506 is disordered; sequence GDGFGEEHDD…KKRAHRQHMK (89 aa). Acidic residues predominate over residues 424 to 435; that stretch reads EHDDSDDNDDEE. The span at 454–490 shows a compositional bias: basic and acidic residues; sequence EKERKIAMHTRNREETAEERKERKAAVKEEKREQRKE. A compositionally biased stretch (basic residues) spans 491 to 506; sequence KIPKHLKKRAHRQHMK.

The protein belongs to the protein kinase superfamily. RIO-type Ser/Thr kinase family. Mg(2+) serves as cofactor. As to expression, expressed in vulva and uterine cells, uterine seam cells (utse), spermatheca and in the nervous system including chemosensory neurons in the head, nerve ring neurons (RID/RIF), inhibitory motor neurons (DA/DD/VA/VD), mechanosensory neurons (ALML/PLML) and tail sensory neurons (DVA//PDA). Also expressed in intestine and pharynx (procorpus) and rectal valve and gland.

It is found in the cytoplasm. It catalyses the reaction L-seryl-[protein] + ATP = O-phospho-L-seryl-[protein] + ADP + H(+). The enzyme catalyses L-threonyl-[protein] + ATP = O-phospho-L-threonyl-[protein] + ADP + H(+). In terms of biological role, involved in the final steps of cytoplasmic maturation of the 40S ribosomal subunit. Despite the protein kinase domain is proposed to act predominantly as an ATPase. The catalytic activity regulates its dynamic association with the 40S subunit. Plays a role in oogenesis by regulating germ cell proliferation, progression through diplotene and diakinesis stages and oocyte maturation. Regulates germline development probably by regulating the phosphorylation of mpk-1. Involved in larval development. This is Serine/threonine-protein kinase RIO1 from Caenorhabditis elegans.